The primary structure comprises 171 residues: uncharacterized protein (171 aa).

This is an uncharacterized protein from Caenorhabditis elegans.